The sequence spans 421 residues: Putative aspartate aminotransferase, cytoplasmic 2 (421 aa).

Residue Lys249 is modified to N6-(pyridoxal phosphate)lysine.

It belongs to the class-I pyridoxal-phosphate-dependent aminotransferase family. In terms of assembly, homodimer. It depends on pyridoxal 5'-phosphate as a cofactor.

The protein resides in the cytoplasm. It catalyses the reaction L-aspartate + 2-oxoglutarate = oxaloacetate + L-glutamate. The sequence is that of Putative aspartate aminotransferase, cytoplasmic 2 (GOT1L1) from Homo sapiens (Human).